A 219-amino-acid polypeptide reads, in one-letter code: Transmembrane protein 179B (219 aa).

4 consecutive transmembrane segments (helical) span residues 9–29, 65–85, 96–116, and 167–187; these read VELA…AAMT, FVAG…LFWI, GAIG…LVLV, and TSSW…VVQW. Residues 198–219 are disordered; the sequence is ERGDPEWSSETDALVGSRLSHS. 2 positions are modified to phosphoserine: S206 and S214.

This sequence belongs to the TMEM179 family.

The protein localises to the membrane. This is Transmembrane protein 179B (TMEM179B) from Homo sapiens (Human).